The primary structure comprises 315 residues: Probable cell division protein WhiA (315 aa).

Residues 277-311 (SLQELGAMMPSGQISKSGVNHRLRKLNQIAEGYQQ) constitute a DNA-binding region (H-T-H motif).

Belongs to the WhiA family.

In terms of biological role, involved in cell division and chromosome segregation. The chain is Probable cell division protein WhiA from Lacticaseibacillus paracasei (strain ATCC 334 / BCRC 17002 / CCUG 31169 / CIP 107868 / KCTC 3260 / NRRL B-441) (Lactobacillus paracasei).